Here is a 62-residue protein sequence, read N- to C-terminus: ATP synthase subunit K, mitochondrial (62 aa).

Residues 14–30 (HHLAIATIGTVVALVAP) traverse the membrane as a helical segment.

F-type ATP synthases have 2 components, the catalytic core F(1) and the membrane-embedded component F(0), linked together by a central stalk and a peripheral stalk. The central stalk, also called rotor shaft, is often seen as part of F(1). The peripheral stalk is seen as part of F(0). F(0) contains the membrane channel next to the rotor. F-type ATP synthases form dimers but each monomer functions independently in ATP generation. The dimer consists of 18 different polypeptides: ATP1 (subunit alpha, part of F(1), 3 molecules per monomer), ATP2 (subunit beta, part of F(1), 3 molecules per monomer), ATP3 (subunit gamma, part of the central stalk), ATP4 (subunit b, part of the peripheral stalk), ATP5/OSCP (subunit 5/OSCP, part of the peripheral stalk), ATP6 (subunit a, part of the peripheral stalk), ATP7 (subunit d, part of the peripheral stalk), ATP8 (subunit 8, part of the peripheral stalk), OLI1 (subunit c, part of the rotor, 10 molecules per monomer), ATP14 (subunit h, part of the peripheral stalk), ATP15 (subunit epsilon, part of the central stalk), ATP16 (subunit delta, part of the central stalk), ATP17 (subunit f, part of the peripheral stalk), ATP18 (subunit i/j, part of the peripheral stalk). Dimer-specific subunits are ATP19 (subunit k, at interface between monomers), ATP20 (subunit g, at interface between monomers), TIM11 (subunit e, at interface between monomers). Also contains subunit L.

It is found in the mitochondrion inner membrane. Functionally, mitochondrial membrane ATP synthase (F(1)F(0) ATP synthase or Complex V) produces ATP from ADP in the presence of a proton gradient across the membrane which is generated by electron transport complexes of the respiratory chain. F-type ATP synthases consist of two structural domains, F(1) - containing the extramembraneous catalytic core, and F(0) - containing the membrane proton channel, linked together by a central stalk and a peripheral stalk. During catalysis, ATP synthesis in the catalytic domain of F(1) is coupled via a rotary mechanism of the central stalk subunits to proton translocation. Part of the complex F(0) domain. Minor subunit located with subunit a/ATP6 in the membrane. The K chain binds the dimeric form by interacting with the G and E chains. This chain is ATP synthase subunit K, mitochondrial, found in Pichia angusta (Yeast).